The sequence spans 378 residues: Circumsporozoite protein (378 aa).

A signal peptide spans Met1–Cys22. Positions Ala50–Glu288 are disordered. Basic and acidic residues predominate over residues Asn65–Leu93. A required for the binding to heparan sulfate proteoglycans (HSPGs) on the surface of host hepatocytes region spans residues Lys81–Arg89. Residues Lys92–Pro96 are region I; contains the proteolytic cleavage site. The span at Pro96–Gly203 shows a compositional bias: low complexity. A 1-1; truncated repeat occupies Pro97–Ala102. Residues Pro97–Ala191 are 11 X 9 AA tandem repeats of P-[AE]-G-D-G-A-P-A-[AG]. 13 tandem repeats follow at residues Pro103 to Ala111, Pro112 to Ala120, Pro121 to Ala129, Pro130 to Ala138, Pro139 to Ala147, Pro148 to Ala156, Pro157 to Ala165, Pro166 to Ala174, Pro175 to Ala183, Pro184 to Ala191, Asn193 to Gly208, Asn209 to Gly224, and Asn225 to Gly240. Residues Asn193–Gly268 are 6 X 16 AA approximate tandem repeats of N-R-A-G-G-Q-P-A-A-G-G-N-Q-A-G-G. Residues Gly228–Ala251 are compositionally biased toward low complexity. One copy of the 2-4; approximate; truncated repeat lies at Gln241 to Ala251. One copy of the 2-5; approximate; truncated repeat lies at Gln252–Ala260. Composition is skewed to gly residues over residues Gln252–Asn266 and Glu274–Gln283. Residues Gln261–Gly268 form a 2-6; approximate; truncated repeat. Positions Lys304 to Ala356 constitute a TSP type-1 domain. Disulfide bonds link Cys316–Cys350 and Cys320–Cys355. An O-linked (Fuc) threonine glycan is attached at Thr319. A lipid anchor (GPI-anchor amidated cysteine) is attached at Cys355. Positions Ala356–Asn378 are cleaved as a propeptide — removed in mature form.

Belongs to the plasmodium circumsporozoite protein family. Post-translationally, during host cell invasion, proteolytically cleaved at the cell membrane in the region I by a papain-like cysteine protease of parasite origin. Cleavage is triggered by the sporozoite contact with highly sulfated heparan sulfate proteoglycans (HSPGs) present on the host hepatocyte cell surface. Cleavage exposes the TSP type-1 (TSR) domain and is required for productive invasion of host hepatocytes but not for adhesion to the host cell membrane. Cleavage is dispensable for sporozoite development in the oocyst, motility and for traversal of host and vector cells. In terms of processing, O-glycosylated; maybe by POFUT2.

The protein localises to the cell membrane. It is found in the cytoplasm. Functionally, essential sporozoite protein. In the mosquito vector, required for sporozoite development in the oocyst, migration through the vector hemolymph and entry into the vector salivary glands. In the vertebrate host, required for sporozoite migration through the host dermis and infection of host hepatocytes. Binds to highly sulfated heparan sulfate proteoglycans (HSPGs) on the surface of host hepatocytes. Its function is as follows. In the vertebrate host, binds to highly sulfated heparan sulfate proteoglycans (HSPGs) on the surface of host hepatocytes and is required for sporozoite invasion of the host hepatocytes. The polypeptide is Circumsporozoite protein (Plasmodium cynomolgi (strain Berok)).